A 190-amino-acid polypeptide reads, in one-letter code: Potassium-transporting ATPase KdpC subunit (190 aa).

Residues 10-30 form a helical membrane-spanning segment; the sequence is TFLFLLLITGGVYPLLTTALG.

It belongs to the KdpC family. As to quaternary structure, the system is composed of three essential subunits: KdpA, KdpB and KdpC.

It localises to the cell inner membrane. Part of the high-affinity ATP-driven potassium transport (or Kdp) system, which catalyzes the hydrolysis of ATP coupled with the electrogenic transport of potassium into the cytoplasm. This subunit acts as a catalytic chaperone that increases the ATP-binding affinity of the ATP-hydrolyzing subunit KdpB by the formation of a transient KdpB/KdpC/ATP ternary complex. The chain is Potassium-transporting ATPase KdpC subunit from Escherichia fergusonii (strain ATCC 35469 / DSM 13698 / CCUG 18766 / IAM 14443 / JCM 21226 / LMG 7866 / NBRC 102419 / NCTC 12128 / CDC 0568-73).